Consider the following 392-residue polypeptide: Fasciculation and elongation protein zeta-1 (392 aa).

The segment at 1–37 (MEAPLVSLDEEFEDLRPSCSEDPEEKPQCFYGSSPHH) is disordered. At serine 58 the chain carries Phosphoserine. The tract at residues 175–198 (MQNSPDPEEEEEVLEEEDGGETSS) is disordered. A compositionally biased stretch (acidic residues) spans 180–194 (DPEEEEEVLEEEDGG). Residues 230 to 298 (SELTELLDQV…KKRRKEKGLS (69 aa)) adopt a coiled-coil conformation. Phosphoserine is present on residues serine 298 and serine 316.

This sequence belongs to the zygin family. In terms of assembly, homodimer; disulfide-linked. May form heterodimers with FEZ2. Interacts with the NH2-terminal variable region (V1) of PKC zeta and weakly with that of PKC epsilon. Interacts with UBE4B. Interacts with SAP30L. Interacts with SCOC and ULK1; SCOC interferes with ULK1-binding to FEZ1. Directly interacts with SCOC and UVRAG. Stabilizes the interaction between SCOC and UVRAG during amino acid starvation. Phosphorylated by protein kinase C zeta; which enhances interaction with UBE4B and polyubiquitination. Post-translationally, polyubiquitinated in a UBE4B-dependent manner; which does not lead to proteasomal degradation and may be important for neurogenic activity. Polyubiquitin linkage seems to be mainly through Lys-26. As to expression, mainly expressed in brain.

It localises to the cytoplasm. The protein localises to the cytoskeleton. Its subcellular location is the microtubule organizing center. The protein resides in the centrosome. It is found in the cell membrane. Functionally, may be involved in axonal outgrowth as component of the network of molecules that regulate cellular morphology and axon guidance machinery. Able to restore partial locomotion and axonal fasciculation to C.elegans unc-76 mutants in germline transformation experiments. May participate in the transport of mitochondria and other cargos along microtubules. The sequence is that of Fasciculation and elongation protein zeta-1 (FEZ1) from Homo sapiens (Human).